The primary structure comprises 71 residues: Large ribosomal subunit protein bL31 (71 aa).

The Zn(2+) site is built by C16, C18, C37, and C40.

The protein belongs to the bacterial ribosomal protein bL31 family. Type A subfamily. In terms of assembly, part of the 50S ribosomal subunit. Zn(2+) is required as a cofactor.

Its function is as follows. Binds the 23S rRNA. This Serratia proteamaculans (strain 568) protein is Large ribosomal subunit protein bL31.